Here is a 60-residue protein sequence, read N- to C-terminus: MGVPKRRTSKARKNKRRSIWGQMAAPTLVECPQCHQLKLNHRVCPKCGYYKGREAIQVAE.

This sequence belongs to the bacterial ribosomal protein bL32 family.

The polypeptide is Large ribosomal subunit protein bL32 (Moorella thermoacetica (strain ATCC 39073 / JCM 9320)).